Consider the following 330-residue polypeptide: Aspartate--ammonia ligase (330 aa).

The protein belongs to the class-II aminoacyl-tRNA synthetase family. AsnA subfamily.

It localises to the cytoplasm. The catalysed reaction is L-aspartate + NH4(+) + ATP = L-asparagine + AMP + diphosphate + H(+). The protein operates within amino-acid biosynthesis; L-asparagine biosynthesis; L-asparagine from L-aspartate (ammonia route): step 1/1. This Haemophilus influenzae (strain PittGG) protein is Aspartate--ammonia ligase.